The following is a 302-amino-acid chain: MAPRLRRNLSTDTDTNTTAAATAVATLERPATADAQHTADAQHTADAQHTADAQHTAETAETRGADGAAIRIRGLRRTFGNHTVLDGLDLTVASGEFVALLGRSGSGKSTLIRILGGFDGGISGEVLATRQRSVVFQEARLLPWTRTLANVTIGLSGRDVAERGRVALAEVGLAGRERSWPVALSGGEAQRVALARALVREPDLVMLDEPFGALDALTRIRMHALLQQLCRRHRPAVLFVTHDVDEAILLADRVLVLTEGRLSLDVPVDVASPRRRTDPAFDRLRSTLLAELGVDELAEGDH.

Over residues 30 to 57 the composition is skewed to low complexity; sequence PATADAQHTADAQHTADAQHTADAQHTA. Positions 30 to 65 are disordered; the sequence is PATADAQHTADAQHTADAQHTADAQHTAETAETRGA. In terms of domain architecture, ABC transporter spans 70–284; it reads IRIRGLRRTF…RRTDPAFDRL (215 aa). An ATP-binding site is contributed by 102–109; it reads GRSGSGKS.

It belongs to the ABC transporter superfamily. Aliphatic sulfonates importer (TC 3.A.1.17.2) family. The complex is composed of two ATP-binding proteins (SsuB), two transmembrane proteins (SsuC) and a solute-binding protein (SsuA).

It localises to the cell membrane. The catalysed reaction is ATP + H2O + aliphatic sulfonate-[sulfonate-binding protein]Side 1 = ADP + phosphate + aliphatic sulfonateSide 2 + [sulfonate-binding protein]Side 1.. Part of the ABC transporter complex SsuABC involved in aliphatic sulfonates import. Responsible for energy coupling to the transport system. This Frankia casuarinae (strain DSM 45818 / CECT 9043 / HFP020203 / CcI3) protein is Aliphatic sulfonates import ATP-binding protein SsuB.